Here is a 245-residue protein sequence, read N- to C-terminus: Probable transcriptional regulatory protein NSE_0641 (245 aa).

The segment at 1–22 is disordered; sequence MAGHSQYANIKHRKNAQDAKRA.

Belongs to the TACO1 family.

The protein localises to the cytoplasm. This is Probable transcriptional regulatory protein NSE_0641 from Neorickettsia sennetsu (strain ATCC VR-367 / Miyayama) (Ehrlichia sennetsu).